The primary structure comprises 433 residues: Oxysterol-binding protein-like protein OBPa (433 aa).

It belongs to the OSBP family.

This is Oxysterol-binding protein-like protein OBPa (OBPA) from Candida albicans (strain SC5314 / ATCC MYA-2876) (Yeast).